A 283-amino-acid chain; its full sequence is Pantothenate synthetase (283 aa).

Position 30-37 (30-37 (MGNLHDGH)) interacts with ATP. The Proton donor role is filled by His-37. Position 61 (Gln-61) interacts with (R)-pantoate. Gln-61 is a binding site for beta-alanine. An ATP-binding site is contributed by 149–152 (GEKD). Gln-155 is a binding site for (R)-pantoate. 186–189 (LSSR) contributes to the ATP binding site.

Belongs to the pantothenate synthetase family. In terms of assembly, homodimer.

The protein localises to the cytoplasm. It catalyses the reaction (R)-pantoate + beta-alanine + ATP = (R)-pantothenate + AMP + diphosphate + H(+). The protein operates within cofactor biosynthesis; (R)-pantothenate biosynthesis; (R)-pantothenate from (R)-pantoate and beta-alanine: step 1/1. In terms of biological role, catalyzes the condensation of pantoate with beta-alanine in an ATP-dependent reaction via a pantoyl-adenylate intermediate. The sequence is that of Pantothenate synthetase from Escherichia coli (strain ATCC 8739 / DSM 1576 / NBRC 3972 / NCIMB 8545 / WDCM 00012 / Crooks).